A 144-amino-acid polypeptide reads, in one-letter code: Transcriptional regulator MraZ (144 aa).

SpoVT-AbrB domains lie at 5–47 and 77–120; these read TYTP…PRAE and TDEQ…DAQA.

It belongs to the MraZ family. As to quaternary structure, forms oligomers.

It is found in the cytoplasm. The protein localises to the nucleoid. The protein is Transcriptional regulator MraZ of Mycolicibacterium vanbaalenii (strain DSM 7251 / JCM 13017 / BCRC 16820 / KCTC 9966 / NRRL B-24157 / PYR-1) (Mycobacterium vanbaalenii).